Here is a 276-residue protein sequence, read N- to C-terminus: Large ribosomal subunit protein uL2 (276 aa).

A disordered region spans residues 219–268; the sequence is TVRGSVMNPNDHPHGGGEGRQPVGRKSPMTPWGKPALGLKTRNKKAKSSK.

It belongs to the universal ribosomal protein uL2 family. In terms of assembly, part of the 50S ribosomal subunit. Forms a bridge to the 30S subunit in the 70S ribosome.

In terms of biological role, one of the primary rRNA binding proteins. Required for association of the 30S and 50S subunits to form the 70S ribosome, for tRNA binding and peptide bond formation. It has been suggested to have peptidyltransferase activity; this is somewhat controversial. Makes several contacts with the 16S rRNA in the 70S ribosome. This Lactococcus lactis subsp. lactis (strain IL1403) (Streptococcus lactis) protein is Large ribosomal subunit protein uL2.